A 308-amino-acid chain; its full sequence is Mycothiol acetyltransferase (308 aa).

N-acetyltransferase domains lie at R8–R155 and V160–R308. E39 contributes to the 1D-myo-inositol 2-(L-cysteinylamino)-2-deoxy-alpha-D-glucopyranoside binding site. L84–V86 contacts acetyl-CoA. 1D-myo-inositol 2-(L-cysteinylamino)-2-deoxy-alpha-D-glucopyranoside is bound by residues E187, K226, and E240. Acetyl-CoA is bound by residues L244 to I246 and Q251 to R257. Y278 serves as a coordination point for 1D-myo-inositol 2-(L-cysteinylamino)-2-deoxy-alpha-D-glucopyranoside.

Belongs to the acetyltransferase family. MshD subfamily. Monomer.

The enzyme catalyses 1D-myo-inositol 2-(L-cysteinylamino)-2-deoxy-alpha-D-glucopyranoside + acetyl-CoA = mycothiol + CoA + H(+). Its function is as follows. Catalyzes the transfer of acetyl from acetyl-CoA to desacetylmycothiol (Cys-GlcN-Ins) to form mycothiol. This Geodermatophilus obscurus (strain ATCC 25078 / DSM 43160 / JCM 3152 / CCUG 61914 / KCC A-0152 / KCTC 9177 / NBRC 13315 / NRRL B-3577 / G-20) protein is Mycothiol acetyltransferase.